A 230-amino-acid polypeptide reads, in one-letter code: Large ribosomal subunit protein uL1 (230 aa).

The protein belongs to the universal ribosomal protein uL1 family. Part of the 50S ribosomal subunit.

Binds directly to 23S rRNA. The L1 stalk is quite mobile in the ribosome, and is involved in E site tRNA release. Functionally, protein L1 is also a translational repressor protein, it controls the translation of the L11 operon by binding to its mRNA. In Desulfitobacterium hafniense (strain DSM 10664 / DCB-2), this protein is Large ribosomal subunit protein uL1.